Reading from the N-terminus, the 220-residue chain is MMMMSNLPNDLVEEILSRVTVTFMRTVRSICKKWNALTKDRSFTNKYIRNIAALGEREFLMIKEFSIYLVGVNLHGIQNNNFDLSIELKGKLISMDNTIRRFCISQIFHCNGLFLCVSQKDMDNRLVVWNPYCSKPRWIKPSYNYRTVDRFALGYDKSCGSHKILRLFGDNLNNLEIYDLSSNSWRVPNVTLERDIVYMQPGVSLKEKTYWYARDKESEN.

The F-box domain occupies 1-51 (MMMMSNLPNDLVEEILSRVTVTFMRTVRSICKKWNALTKDRSFTNKYIRNI).

This Arabidopsis thaliana (Mouse-ear cress) protein is Putative F-box protein At3g20705.